A 922-amino-acid chain; its full sequence is MDYRNTLNLPETDFPMRGNLPQREPEILQKWEEEDIYATVQKARAGRPKFVLHDGPPYANGDIHLGHALNKVIKDIIVKYKTMAGFDAPYVPGWDTHGLPIEQQVIKKLGVNRHAVSVVEFRRMCKEYAKKYISIQKEQFKRLGVRGDWKNPYLTLEKEYEAAQIGVFGKMARKKYIYKGLKPVYWCPSCETALAEAEIEYAEKTSHAIYVKFPVKEGKGVLTDENTFVIIWTTTPWTLPANLAITLHEEFSYVQVQVEKEHWLVAEGMLESLRSLWNLELPVEKRFVGKELEGVICKHPFIERDSVLILGEHVTLEAGTGCVHTAPGHGEEDFNVGKKYGLPVLCPVDHQGKFTAEGGAYAGMKVDKANPVIIEDLKNLHALVHEDKIKHSYAHCWRCNNPIIYRATEQWFASIDGFRKAALEEIDKVQWIPSWGKDRIYNMIADRGDWCISRQRTWGVPIPIFYCEDCGKEIISDETIAKVQEIFREEGSDAWFLRPAAELLPEGFTCACGGKSFRKETDIMDVWFDSGTSHTSVLMERKELAWPADLYMEGSDQHRGWFNSSLSTSVAAYGKAPYKAVLTHGFLVDEKGRKMSKSLGNGVDPLQVTKEMGADILRLWVCAADYKNDVAVSPRIMKQMSEAYRKIRNTLRFLLSNLNDFDPAKDRVAYKDLPEIDRWALLQLGKVTQRVLQGYEKYEFHWVYHSVHNFCAVELSAIYLDIVKDRLYVEGKNSTLRRASQTVLYDVLNALVRLMAPVLTYTADEIWPYVPGVPAGSHVQTEEMPEALPQWLDEALEKKWDTLLAVRSEVTKALEKARQDKLINHPLTAQVDLYPNAELEGFLRGIPNLSEIFIVSAVQLHSAGEEKPEGLSMAEDLAGFGIAVNSAAGEKCERCWIYDTGVGENQEHPTLCPRCASVVSHL.

The 'HIGH' region signature appears at 57 to 67 (PYANGDIHLGH). Glu553 lines the L-isoleucyl-5'-AMP pocket. The 'KMSKS' region signature appears at 594–598 (KMSKS). Lys597 serves as a coordination point for ATP. Residues Cys892, Cys895, Cys912, and Cys915 each contribute to the Zn(2+) site.

It belongs to the class-I aminoacyl-tRNA synthetase family. IleS type 1 subfamily. Monomer. Zn(2+) serves as cofactor.

The protein localises to the cytoplasm. It catalyses the reaction tRNA(Ile) + L-isoleucine + ATP = L-isoleucyl-tRNA(Ile) + AMP + diphosphate. Catalyzes the attachment of isoleucine to tRNA(Ile). As IleRS can inadvertently accommodate and process structurally similar amino acids such as valine, to avoid such errors it has two additional distinct tRNA(Ile)-dependent editing activities. One activity is designated as 'pretransfer' editing and involves the hydrolysis of activated Val-AMP. The other activity is designated 'posttransfer' editing and involves deacylation of mischarged Val-tRNA(Ile). This chain is Isoleucine--tRNA ligase, found in Desulfitobacterium hafniense (strain Y51).